Reading from the N-terminus, the 515-residue chain is Zinc metalloproteinase-disintegrin-like EoMP06 (515 aa).

Positions 1–94 (VEDHCYYHGR…TLGLIVPPHG (94 aa)) are excised as a propeptide. Residue Gln-95 is modified to Pyrrolidone carboxylic acid. A Peptidase M12B domain is found at 100-296 (KFIELIIVVD…YNPKCIVDPP (197 aa)). Glu-103 serves as a coordination point for Ca(2+). An N-linked (GlcNAc...) asparagine glycan is attached at Asn-160. Ca(2+) is bound at residue Asp-187. N-linked (GlcNAc...) asparagine glycosylation is found at Asn-194 and Asn-225. Cystine bridges form between Cys-211/Cys-291, Cys-251/Cys-275, and Cys-253/Cys-258. Residue His-236 coordinates Zn(2+). Glu-237 is an active-site residue. Positions 240 and 246 each coordinate Zn(2+). 7 residues coordinate Ca(2+): Cys-291, Val-306, Asn-309, Val-311, Glu-313, Glu-316, and Asp-319. The Disintegrin domain maps to 304–390 (PAVCGNGVWE…ECPRNEFQRN (87 aa)). 14 disulfides stabilise this stretch: Cys-307-Cys-336, Cys-318-Cys-331, Cys-320-Cys-326, Cys-330-Cys-353, Cys-344-Cys-350, Cys-349-Cys-375, Cys-362-Cys-382, Cys-369-Cys-401, Cys-394-Cys-406, Cys-413-Cys-466, Cys-428-Cys-477, Cys-441-Cys-454, Cys-461-Cys-503, and Cys-497-Cys-508. The short motif at 368–370 (DCD) is the D/ECD-tripeptide element. 3 residues coordinate Ca(2+): Asp-370, Val-371, and Asn-385.

Belongs to the venom metalloproteinase (M12B) family. P-III subfamily. P-IIIa sub-subfamily. As to quaternary structure, monomer. Zn(2+) is required as a cofactor. As to expression, expressed by the venom gland.

The protein resides in the secreted. Its function is as follows. Snake venom zinc metalloproteinase that catalyzes the conversion of prothrombin (F2) to alpha-thrombin through formation of a thrombin intermediate, thereby functioning as a procoagulant protein. This Echis ocellatus (Ocellated saw-scaled viper) protein is Zinc metalloproteinase-disintegrin-like EoMP06.